The following is a 638-amino-acid chain: Neuroendocrine convertase 2 (638 aa).

An N-terminal signal peptide occupies residues 1–25 (MKGGCVSQWKAAAGFLFCVMVFASA). A propeptide spanning residues 26–109 (ERPVFTNHFL…QQEGFDRKKR (84 aa)) is cleaved from the precursor. Positions 129–453 (QWYLINTGQA…YGVLDAGAMV (325 aa)) constitute a Peptidase S8 domain. Residues aspartate 167 and histidine 208 each act as charge relay system in the active site. Disulfide bonds link cysteine 225-cysteine 376 and cysteine 317-cysteine 347. N-linked (GlcNAc...) asparagine glycosylation is present at asparagine 375. Residue serine 384 is the Charge relay system of the active site. Residues 461 to 597 (TVPERFHCVG…TLMLHGTQSA (137 aa)) form the P/Homo B domain. Cysteine 468 and cysteine 494 are joined by a disulfide. 2 N-linked (GlcNAc...) asparagine glycosylation sites follow: asparagine 514 and asparagine 524.

It belongs to the peptidase S8 family. Furin subfamily.

The protein localises to the cytoplasmic vesicle. It localises to the secretory vesicle. It is found in the secreted. It catalyses the reaction Release of protein hormones and neuropeptides from their precursors, generally by hydrolysis of -Lys-Arg-|- bonds.. Functionally, serine endopeptidase which is involved in the processing of hormone and other protein precursors at sites comprised of pairs of basic amino acid residues. Responsible for the release of glucagon from proglucagon in pancreatic A cells. In Homo sapiens (Human), this protein is Neuroendocrine convertase 2 (PCSK2).